We begin with the raw amino-acid sequence, 1071 residues long: DNA-directed RNA polymerase subunit beta (1071 aa).

The protein belongs to the RNA polymerase beta chain family. In terms of assembly, in plastids the minimal PEP RNA polymerase catalytic core is composed of four subunits: alpha, beta, beta', and beta''. When a (nuclear-encoded) sigma factor is associated with the core the holoenzyme is formed, which can initiate transcription.

The protein localises to the plastid. Its subcellular location is the chloroplast. The catalysed reaction is RNA(n) + a ribonucleoside 5'-triphosphate = RNA(n+1) + diphosphate. Functionally, DNA-dependent RNA polymerase catalyzes the transcription of DNA into RNA using the four ribonucleoside triphosphates as substrates. This Anthoceros angustus (Hornwort) protein is DNA-directed RNA polymerase subunit beta.